The primary structure comprises 70 residues: Small, acid-soluble spore protein 1 (70 aa).

The protein belongs to the alpha/beta-type SASP family.

Functionally, SASP are bound to spore DNA. They are double-stranded DNA-binding proteins that cause DNA to change to an a-like conformation. They protect the DNA backbone from chemical and enzymatic cleavage and are thus involved in dormant spore's high resistance to UV light. In Bacillus cereus, this protein is Small, acid-soluble spore protein 1 (sasP-1).